Reading from the N-terminus, the 773-residue chain is Disintegrin and metalloproteinase domain-containing protein 11 (773 aa).

Residues 1-24 (MRRLRRWAIAALLLLPLLPPPGLG) form the signal peptide. A propeptide spanning residues 25 to 229 (ALGPRGALHW…PNWPKLRRKR (205 aa)) is cleaved from the precursor. The disordered stretch occupies residues 36-82 (SSAHVGSPESPEGSEVTEPSRLVRQSSGGEVRKPQLDTRVRQDPPRG). The span at 65 to 79 (EVRKPQLDTRVRQDP) shows a compositional bias: basic and acidic residues. Residues N100 and N167 are each glycosylated (N-linked (GlcNAc...) asparagine). Over 230-738 (QVRRGHPTVH…ERYKGPSGTN (509 aa)) the chain is Extracellular. A Peptidase M12B domain is found at 243–442 (KYVELIVIND…GGGSCLFNKP (200 aa)). Residues 336–773 (GRTFQSTSSG…NIRRGRSGGA (438 aa)) form a required for localization to cerebellar cortex basket cell terminals. Also required for localization of KCNA1, KCNA2, DLG4 and ADAM22 to cerebellar cortex basket cell terminal perisomatic axons and pinceaux region. Disulfide bonds link C353–C437, C396–C421, C398–C405, and C507–C527. Residues 448-535 (PPECGNGFVE…QCPPNLHKLD (88 aa)) form the Disintegrin domain. 2 N-linked (GlcNAc...) asparagine glycosylation sites follow: N609 and N677. 3 disulfide bridges follow: C681–C696, C690–C702, and C704–C713. The EGF-like domain maps to 681 to 713 (CPGSGERRICSHHGVCSNEGKCICQPDWTGKDC). A helical membrane pass occupies residues 739–759 (IIIGSIAGAVLVAAIVLGGTG). Residues 760 to 773 (WGFKNIRRGRSGGA) are Cytoplasmic-facing.

Interacts with LGI1 and LGI4. Interacts with KCNA1/KV1.1, KCNA2/KV1.2, DLG4/PSD-95 and ADAM22. In terms of processing, the precursor is cleaved by a furin endopeptidase. As to expression, abundantly expressed in cerebellar cortex basket cell terminals and pinceaux, weakly expressed in Purkinje cells (at protein level). Weakly expressed in the heart. Abundantly in expressed in neurons throughout the central nervous system including the telencephalon, diencephalic and brainstem nuclei, cerebellum and spinal cord. Expressed in the peripheral nervous system trigeminal and dorsal root ganglia. Expressed in the ganglion and bipolar cells of the retinae and weakly in the cornea of the eyes. Expressed in the hepatocytes of the parenchyma and hepatic lobules of the liver. Expressed in distinct focal areas in the juxtamedullary cortex of the kidney. Expressed in spermatocytes in the seminiferous tubules of the testes. Expressed in the stratum spinosum of the stratified squamous epithelia of the tongue and esophagus.

Its subcellular location is the presynaptic cell membrane. It localises to the perikaryon. It is found in the cell projection. The protein localises to the axon. Probable ligand for integrin in the brain. This is a non catalytic metalloprotease-like protein. Required for localization of the potassium channel subunit proteins KCNA1/KV1.1 and KCNA2/KV1.2 at cerebellar cortex basket cell distal terminals, is thereby involved in ephaptic inhibitory synchronization of Purkinje cell firing and response to stress. Plays a role in spatial learning and motor coordination. Involved in the nociceptive pain response to chemical-derived stimulation. This chain is Disintegrin and metalloproteinase domain-containing protein 11 (Adam11), found in Mus musculus (Mouse).